The primary structure comprises 229 residues: Uracil-DNA glycosylase (229 aa).

The active-site Proton acceptor is the aspartate 70.

This sequence belongs to the uracil-DNA glycosylase (UDG) superfamily. UNG family.

The protein localises to the cytoplasm. The catalysed reaction is Hydrolyzes single-stranded DNA or mismatched double-stranded DNA and polynucleotides, releasing free uracil.. Its function is as follows. Excises uracil residues from the DNA which can arise as a result of misincorporation of dUMP residues by DNA polymerase or due to deamination of cytosine. In Chlamydia abortus (strain DSM 27085 / S26/3) (Chlamydophila abortus), this protein is Uracil-DNA glycosylase.